Here is a 429-residue protein sequence, read N- to C-terminus: Adenylosuccinate synthetase (429 aa).

GTP is bound by residues 12-18 (GDEGKGK) and 40-42 (GHT). The active-site Proton acceptor is the D13. Residues D13 and G40 each coordinate Mg(2+). IMP contacts are provided by residues 13-16 (DEGK), 38-41 (NAGH), T129, R143, Q223, T238, and R302. H41 (proton donor) is an active-site residue. A substrate-binding site is contributed by 298–304 (VVTGRKR). Residues R304, 330–332 (KLD), and 412–414 (STS) each bind GTP.

The protein belongs to the adenylosuccinate synthetase family. In terms of assembly, homodimer. It depends on Mg(2+) as a cofactor.

It is found in the cytoplasm. The enzyme catalyses IMP + L-aspartate + GTP = N(6)-(1,2-dicarboxyethyl)-AMP + GDP + phosphate + 2 H(+). It participates in purine metabolism; AMP biosynthesis via de novo pathway; AMP from IMP: step 1/2. Functionally, plays an important role in the de novo pathway of purine nucleotide biosynthesis. Catalyzes the first committed step in the biosynthesis of AMP from IMP. This Brucella anthropi (strain ATCC 49188 / DSM 6882 / CCUG 24695 / JCM 21032 / LMG 3331 / NBRC 15819 / NCTC 12168 / Alc 37) (Ochrobactrum anthropi) protein is Adenylosuccinate synthetase.